Here is an 85-residue protein sequence, read N- to C-terminus: Small ribosomal subunit protein bS16c (85 aa).

This sequence belongs to the bacterial ribosomal protein bS16 family.

The protein resides in the plastid. Its subcellular location is the chloroplast. The protein is Small ribosomal subunit protein bS16c of Oryza nivara (Indian wild rice).